Reading from the N-terminus, the 251-residue chain is MIESELATSRWSLMLEADIATQTTRSLTNELSFIVAGLRPSTKESVLHFLELIFINLKYQSKKWLYSLVICKSLIALLGRKRLSANVRKIVRFLNVIICVIGLWKGLSAMSGKNTFINGLQSYLISETALPELGSFQELSTSSLGSFRMFQQIAVGFVDALFCTRIPASLWIKYKEYTTSAETTVPQECGLCMMCVQRGDERVAITTPYTTDCGHTYCYACIMSRLKLVNNVSCPICKHRIRFALPDQTMG.

The segment at 192–238 (CMMCVQRGDERVAITTPYTTDCGHTYCYACIMSRLKLVNNVSCPICK) adopts an RING-type zinc-finger fold.

The protein localises to the cytoplasm. This is an uncharacterized protein from Schizosaccharomyces pombe (strain 972 / ATCC 24843) (Fission yeast).